Consider the following 485-residue polypeptide: MEWEIVIGLETHVQLATESKIFSGSSTRFGAAPNTQANEVDLALPGSLPVMNRGAAERAILFGLAIGAKIAPRSVFARKNYFYPDLPKGYQISQYELPVVVGGTLSFFVGEEEKTINLTRAHLEEDAGKSLHDEFHLANGAPASGIDLNRAGTPLLEIVTEPEMRSAAEAVAYARALHGLVVWLGICDGNMQEGSFRCDANVSVRPRGQVEFGTRAEIKNVNSFRFLERAIQYEVRRQIELIEDGGKVVQETRLYDAERDETRSMRSKEDAHDYRYFPDPDLPTLVIGQDWVEAVRATMPELPSAMRARFEADFGLPAYDAAQLTISRKLAAYFEAVARALPAGQAKLAANWIMGEVTATLNREEKDIADTPVQAAQLAALINRIIDGTISNKIARDVFAAMWAGENGGEPDAIIEARGLKQISDTGTISAMIDEVLAANPAIVAEYRAGKEKAFNSLVGQIMKAARGKANPQQVNDLLKAKLSA.

Belongs to the GatB/GatE family. GatB subfamily. Heterotrimer of A, B and C subunits.

It carries out the reaction L-glutamyl-tRNA(Gln) + L-glutamine + ATP + H2O = L-glutaminyl-tRNA(Gln) + L-glutamate + ADP + phosphate + H(+). The enzyme catalyses L-aspartyl-tRNA(Asn) + L-glutamine + ATP + H2O = L-asparaginyl-tRNA(Asn) + L-glutamate + ADP + phosphate + 2 H(+). In terms of biological role, allows the formation of correctly charged Asn-tRNA(Asn) or Gln-tRNA(Gln) through the transamidation of misacylated Asp-tRNA(Asn) or Glu-tRNA(Gln) in organisms which lack either or both of asparaginyl-tRNA or glutaminyl-tRNA synthetases. The reaction takes place in the presence of glutamine and ATP through an activated phospho-Asp-tRNA(Asn) or phospho-Glu-tRNA(Gln). This Bordetella avium (strain 197N) protein is Aspartyl/glutamyl-tRNA(Asn/Gln) amidotransferase subunit B.